The primary structure comprises 311 residues: Mitochondrial arginine transporter BAC1 (311 aa).

Solcar repeat units lie at residues Phe12–Phe101, Pro111–His203, and Val219–Met305. 6 helical membrane-spanning segments follow: residues Tyr18–Val38, Gly76–Ser96, Pro113–Pro133, Gly178–Tyr197, Gly222–Phe242, and Ala288–Ile308.

The protein belongs to the mitochondrial carrier (TC 2.A.29) family. In terms of tissue distribution, high expression in flowers and siliques. Lower expression in leaves and stems.

Its subcellular location is the mitochondrion inner membrane. With respect to regulation, inhibited by mercuric chloride. Mitochondrial arginine transporter that catalyzes the counter-exchange of arginine with lysine, ornithine, arginine and histidine. Substrate preference in reconstituted proteoliposomes is arginine &gt; lysine &gt; ornithine &gt; histidine. May be involved in the delivery of arginine, released from seed reserves, to mitochondrial arginase and the export of ornithine. In Arabidopsis thaliana (Mouse-ear cress), this protein is Mitochondrial arginine transporter BAC1 (BAC1).